Consider the following 570-residue polypeptide: Proline--tRNA ligase (570 aa).

The protein belongs to the class-II aminoacyl-tRNA synthetase family. ProS type 1 subfamily. Homodimer.

It localises to the cytoplasm. It carries out the reaction tRNA(Pro) + L-proline + ATP = L-prolyl-tRNA(Pro) + AMP + diphosphate. In terms of biological role, catalyzes the attachment of proline to tRNA(Pro) in a two-step reaction: proline is first activated by ATP to form Pro-AMP and then transferred to the acceptor end of tRNA(Pro). As ProRS can inadvertently accommodate and process non-cognate amino acids such as alanine and cysteine, to avoid such errors it has two additional distinct editing activities against alanine. One activity is designated as 'pretransfer' editing and involves the tRNA(Pro)-independent hydrolysis of activated Ala-AMP. The other activity is designated 'posttransfer' editing and involves deacylation of mischarged Ala-tRNA(Pro). The misacylated Cys-tRNA(Pro) is not edited by ProRS. This Acidithiobacillus ferrooxidans (strain ATCC 23270 / DSM 14882 / CIP 104768 / NCIMB 8455) (Ferrobacillus ferrooxidans (strain ATCC 23270)) protein is Proline--tRNA ligase.